The sequence spans 277 residues: 2,3,4,5-tetrahydropyridine-2,6-dicarboxylate N-succinyltransferase (277 aa).

The substrate site is built by Arg106 and Asp143.

Belongs to the transferase hexapeptide repeat family. In terms of assembly, homotrimer.

Its subcellular location is the cytoplasm. It catalyses the reaction (S)-2,3,4,5-tetrahydrodipicolinate + succinyl-CoA + H2O = (S)-2-succinylamino-6-oxoheptanedioate + CoA. The protein operates within amino-acid biosynthesis; L-lysine biosynthesis via DAP pathway; LL-2,6-diaminopimelate from (S)-tetrahydrodipicolinate (succinylase route): step 1/3. The protein is 2,3,4,5-tetrahydropyridine-2,6-dicarboxylate N-succinyltransferase of Xylella fastidiosa (strain Temecula1 / ATCC 700964).